A 1249-amino-acid polypeptide reads, in one-letter code: LRR receptor-like serine/threonine-protein kinase GSO1 (1249 aa).

The first 18 residues, 1–18, serve as a signal peptide directing secretion; sequence MQPLVLLLLFILCFSGLG. The Extracellular portion of the chain corresponds to 19-876; it reads QPGIINNDLQ…QQGLSARSVV (858 aa). Asn77 and Asn117 each carry an N-linked (GlcNAc...) asparagine glycan. 31 LRR repeats span residues 94–118, 119–142, 144–166, 168–190, 191–214, 216–238, 239–262, 264–285, 286–310, 312–334, 336–359, 360–383, 385–407, 408–431, 433–455, 457–479, 480–503, 505–527, 528–551, 553–574, 576–598, 599–622, 623–646, 648–670, 671–694, 696–718, 719–742, 744–766, 767–791, 792–815, and 817–838; these read FDNLIHLDLSSNNLVGPIPTALSNL, TSLESLFLFSNQLTGEIPSQLGSL, NIRSLRIGDNELVGDIPETLGNL, NLQMLALASCRLTGPIPSQLGRL, VRVQSLILQDNYLEGPIPAELGNC, DLTVFTAAENMLNGTIPAELGRL, ENLEILNLANNSLTGEIPSQLGEM, QLQYLSLMANQLQGLIPKSLAD, LGNLQTLDLSANNLTGEIPEEFWNM, QLLDLVLANNHLSGSLPKSICSN, TNLEQLVLSGTQLSGEIPVELSKC, QSLKQLDLSNNSLAGSIPEALFEL, ELTDLYLHNNTLEGTLSPSISNL, TNLQWLVLYHNNLEGKLPKEISAL, KLEVLFLYENRFSGEIPQEIGNC, SLKMIDMFGNHFEGEIPPSIGRL, KELNLLHLRQNELVGGLPASLGNC, QLNILDLADNQLSGSIPSSFGFL, KGLEQLMLYNNSLQGNLPDSLISL, NLTRINLSHNRLNGTIHPLCGS, SYLSFDVTNNGFEDEIPLELGNS, QNLDRLRLGKNQLTGKIPWTLGKI, RELSLLDMSSNALTGTIPLQLVLC, KLTHIDLNNNFLSGPIPPWLGKL, SQLGELKLSSNQFVESLPTELFNC, KLLVLSLDGNSLNGSIPQEIGNL, GALNVLNLDKNQFSGSLPQAMGKL, KLYELRLSRNSLTGEIPVEIGQL, QDLQSALDLSYNNFTGDIPSTIGTL, SKLETLDLSHNQLTGEVPGSVGDM, and SLGYLNVSFNNLGGKLKKQFSR. 3 N-linked (GlcNAc...) asparagine glycosylation sites follow: Asn213, Asn228, and Asn248. Residues Asn298, Asn309, and Asn334 are each glycosylated (N-linked (GlcNAc...) asparagine). 3 N-linked (GlcNAc...) asparagine glycosylation sites follow: Asn369, Asn393, and Asn406. N-linked (GlcNAc...) asparagine glycosylation occurs at Asn454. Residues Asn537, Asn553, Asn558, and Asn565 are each glycosylated (N-linked (GlcNAc...) asparagine). 2 N-linked (GlcNAc...) asparagine glycosylation sites follow: Asn693 and Asn708. The N-linked (GlcNAc...) asparagine glycan is linked to Asn779. Asn822 carries an N-linked (GlcNAc...) asparagine glycan. The chain crosses the membrane as a helical span at residues 877-897; it reads IISAISALTAIGLMILVIALF. The Cytoplasmic portion of the chain corresponds to 898–1249; sequence FKQRHDFFKK…NNRTAGYKKL (352 aa). Phosphothreonine is present on Thr948. Residues 951-1240 form the Protein kinase domain; that stretch reads LSEEFMIGSG…ACDSLLHVYN (290 aa). ATP is bound by residues 957–965 and Lys979; that span reads IGSGGSGKV. Residues Tyr1027 and Tyr1071 each carry the phosphotyrosine modification. Asp1084 (proton acceptor) is an active-site residue. Phosphotyrosine is present on residues Tyr1129 and Tyr1136.

The protein belongs to the protein kinase superfamily. Ser/Thr protein kinase family. As to quaternary structure, interacts with CIF1 and CIF2. In terms of tissue distribution, mostly expressed in siliques, seeds, developing embryos and seedlings, detected in flower buds and roots, but not in leaves or stems.

It localises to the cell membrane. The catalysed reaction is L-seryl-[protein] + ATP = O-phospho-L-seryl-[protein] + ADP + H(+). It catalyses the reaction L-threonyl-[protein] + ATP = O-phospho-L-threonyl-[protein] + ADP + H(+). Its function is as follows. Together with GSO2, receptor-like serine/threonine-kinase required during the development of the epidermal surface in embryos and cotyledons. In coordination with GSO2, regulates root growth through control of cell division and cell fate specification. Controls seedling root growth by modulating sucrose response after germination. Receptor of the peptide hormones CIF1 and CIF2 required for contiguous Casparian strip diffusion barrier formation in roots. Required for localizing CASP proteins into the Casparian strip following an uninterrupted, ring-like domain, to trigger endodermal differentiation and thus regulate potassium ion (K) homeostasis. Involved in the maintenance of water transport and root pressure. May also be involved in the regulation of suberin accumulation in the endodermis. This is LRR receptor-like serine/threonine-protein kinase GSO1 from Arabidopsis thaliana (Mouse-ear cress).